We begin with the raw amino-acid sequence, 68 residues long: Large ribosomal subunit protein bL35 (68 aa).

It belongs to the bacterial ribosomal protein bL35 family.

The polypeptide is Large ribosomal subunit protein bL35 (Rickettsia bellii (strain RML369-C)).